The following is a 403-amino-acid chain: uncharacterized protein (403 aa).

Position 81 (H81) interacts with Zn(2+). D83 is a catalytic residue. D114 provides a ligand contact to Zn(2+). Catalysis depends on E148, which acts as the Proton acceptor. Residues E149, E174, and H374 each contribute to the Zn(2+) site.

It belongs to the peptidase M20A family. Zn(2+) serves as cofactor. The cofactor is Co(2+).

This is an uncharacterized protein from Escherichia coli O157:H7.